Reading from the N-terminus, the 315-residue chain is Tyrosine recombinase XerC (315 aa).

The Core-binding (CB) domain maps to 14–105 (PDLLNERQSW…GLRSLLHHLQ (92 aa)). Residues 126–309 (SLPKPLTDRQ…DTARLLEIYD (184 aa)) form the Tyr recombinase domain. Active-site residues include R169, K193, H261, R264, and H287. The active-site O-(3'-phospho-DNA)-tyrosine intermediate is the Y296.

It belongs to the 'phage' integrase family. XerC subfamily. As to quaternary structure, forms a cyclic heterotetrameric complex composed of two molecules of XerC and two molecules of XerD.

It is found in the cytoplasm. Functionally, site-specific tyrosine recombinase, which acts by catalyzing the cutting and rejoining of the recombining DNA molecules. The XerC-XerD complex is essential to convert dimers of the bacterial chromosome into monomers to permit their segregation at cell division. It also contributes to the segregational stability of plasmids. The sequence is that of Tyrosine recombinase XerC from Agrobacterium fabrum (strain C58 / ATCC 33970) (Agrobacterium tumefaciens (strain C58)).